A 107-amino-acid chain; its full sequence is uncharacterized protein (107 aa).

This is an uncharacterized protein from Homo sapiens (Human).